The following is a 301-amino-acid chain: Pyridoxal 5'-phosphate synthase subunit Pdx1 (301 aa).

Asp-26 provides a ligand contact to D-ribose 5-phosphate. Residue Lys-83 is the Schiff-base intermediate with D-ribose 5-phosphate of the active site. A D-ribose 5-phosphate-binding site is contributed by Gly-155. Arg-167 contributes to the D-glyceraldehyde 3-phosphate binding site. D-ribose 5-phosphate-binding positions include Gly-216 and 237–238 (GS).

The protein belongs to the PdxS/SNZ family. In terms of assembly, homohexamer and homododecamer. In the presence of Pdx2, forms a dodecamer of heterodimers.

Its subcellular location is the cytoplasm. The catalysed reaction is aldehydo-D-ribose 5-phosphate + D-glyceraldehyde 3-phosphate + L-glutamine = pyridoxal 5'-phosphate + L-glutamate + phosphate + 3 H2O + H(+). It participates in cofactor biosynthesis; pyridoxal 5'-phosphate biosynthesis. Its function is as follows. Catalyzes the formation of pyridoxal 5'-phosphate from ribose 5-phosphate (RBP), glyceraldehyde 3-phosphate (G3P) and ammonia. The ammonia is provided by Pdx2. Can also use ribulose 5-phosphate and dihydroxyacetone phosphate as substrates, resulting from enzyme-catalyzed isomerization of RBP and G3P, respectively. The sequence is that of Pyridoxal 5'-phosphate synthase subunit Pdx1 (pdx1) from Plasmodium falciparum (isolate 3D7).